The primary structure comprises 206 residues: Protein Nef (206 aa).

Glycine 2 carries N-myristoyl glycine; by host lipidation. Position 6 is a phosphoserine; by host (serine 6). The interval 62 to 65 (QNEE) is acidic; interacts with host PACS1 and PACS2; stabilizes the interaction of NEF/MHC-I with host AP1M1; necessary for MHC-I internalization. Positions 69 to 78 (PVRPQVPLRP) are SH3-binding; interaction with Src family tyrosine kinases. Residues 72–75 (PQVP) carry the PxxP; stabilizes the interaction of NEF/MHC-I with host AP1M1; necessary for MHC-I internalization motif. Residues 108-124 (EILDLWVYHTQGFFPDW) are mediates dimerization, Nef-PTE1 interaction. Positions 148–180 (LEPEEVERANEGDNNILLHPICQHGQEDEAREV) are binding to ATP6V1H. The Dileucine internalization motif; necessary for CD4 internalization signature appears at 164 to 165 (LL). The Diacidic; necessary for CD4 internalization motif lies at 174–175 (ED).

The protein belongs to the lentivirus primate group Nef protein family. As to quaternary structure, monomer; cytosolic form. Homodimer; membrane bound form. Interacts with Nef associated p21-activated kinase (PAK2); this interaction activates PAK2. Associates with the Nef-MHC-I-AP1 complex; this complex is required for MHC-I internalization. Interacts (via C-terminus) with host PI3-kinase. Interacts with host PACS1; this interaction seems to be weak. Interacts with host PACS2. Interacts with host LCK and MAPK3; these interactions inhibit the kinase activity of the latter. Interacts with host ATP6V1H; this interaction may play a role in CD4 endocytosis. Associates with the CD4-Nef-AP2 complex; this complex is required for CD4 internalization. Interacts with host AP2 subunit alpha and AP2 subunit sigma2. Interacts with TCR-zeta chain; this interaction up-regulates the Fas ligand (FasL) surface expression. Interacts with host HCK, LYN, and SRC; these interactions activate the Src family kinases. Interacts with MAP3K5; this interaction inhibits the Fas and TNFR-mediated death signals. Interacts with beta-COP and PTE1. Interacts with human RACK1; this increases Nef phosphorylation by PKC. Interacts with TP53; this interaction decreases the half-life of TP53, protecting the infected cell against p53-mediated apoptosis. The virion-associated Nef proteins are cleaved by the viral protease to release the soluble C-terminal core protein. Nef is probably cleaved concomitantly with viral structural proteins on maturation of virus particles. Post-translationally, myristoylated. In terms of processing, phosphorylated on serine residues, probably by host PKCdelta and theta.

It is found in the host cell membrane. The protein resides in the virion. It localises to the secreted. Its subcellular location is the host Golgi apparatus membrane. Functionally, factor of infectivity and pathogenicity, required for optimal virus replication. Alters numerous pathways of T-lymphocyte function and down-regulates immunity surface molecules in order to evade host defense and increase viral infectivity. Alters the functionality of other immunity cells, like dendritic cells, monocytes/macrophages and NK cells. Its function is as follows. In infected CD4(+) T-lymphocytes, down-regulates the surface MHC-I, mature MHC-II, CD4, CD28, CCR5 and CXCR4 molecules. Mediates internalization and degradation of host CD4 through the interaction of with the cytoplasmic tail of CD4, the recruitment of AP-2 (clathrin adapter protein complex 2), internalization through clathrin coated pits, and subsequent transport to endosomes and lysosomes for degradation. Diverts host MHC-I molecules to the trans-Golgi network-associated endosomal compartments by an endocytic pathway to finally target them for degradation. MHC-I down-regulation may involve AP-1 (clathrin adapter protein complex 1) or possibly Src family kinase-ZAP70/Syk-PI3K cascade recruited by PACS2. In consequence infected cells are masked for immune recognition by cytotoxic T-lymphocytes. Decreasing the number of immune receptors also prevents reinfection by more HIV particles (superinfection). Down-regulates host SERINC3 and SERINC5 thereby excluding these proteins from the viral particles. Virion infectivity is drastically higher when SERINC3 or SERINC5 are excluded from the viral envelope, because these host antiviral proteins impair the membrane fusion event necessary for subsequent virion penetration. In terms of biological role, bypasses host T-cell signaling by inducing a transcriptional program nearly identical to that of anti-CD3 cell activation. Interaction with TCR-zeta chain up-regulates the Fas ligand (FasL). Increasing surface FasL molecules and decreasing surface MHC-I molecules on infected CD4(+) cells send attacking cytotoxic CD8+ T-lymphocytes into apoptosis. Plays a role in optimizing the host cell environment for viral replication without causing cell death by apoptosis. Protects the infected cells from apoptosis in order to keep them alive until the next virus generation is ready to strike. Inhibits the Fas and TNFR-mediated death signals by blocking MAP3K5/ASK1. Decreases the half-life of TP53, protecting the infected cell against p53-mediated apoptosis. Inhibits the apoptotic signals regulated by the Bcl-2 family proteins through the formation of a Nef/PI3-kinase/PAK2 complex that leads to activation of PAK2 and induces phosphorylation of host BAD. Functionally, extracellular Nef protein targets CD4(+) T-lymphocytes for apoptosis by interacting with CXCR4 surface receptors. In Simian immunodeficiency virus (isolate MB66) (SIV-cpz), this protein is Protein Nef.